The primary structure comprises 493 residues: Farnesoate epoxidase (493 aa).

Residues 1–24 (MLALIVLCFILFFYIISRRHRGLC) form the signal peptide. C433 is a binding site for heme.

The protein belongs to the cytochrome P450 family. Requires heme as cofactor. In terms of tissue distribution, constitutively expressed in corpora allata from the first instar larval to adult stages.

The enzyme catalyses (2E,6E)-farnesoate + reduced [NADPH--hemoprotein reductase] + O2 = juvenile hormone III carboxylate + oxidized [NADPH--hemoprotein reductase] + H2O + H(+). Catalyzes the conversion of farnesoate to juvenile hormone III acid in juvenile hormone biosynthesis. In Bombyx mori (Silk moth), this protein is Farnesoate epoxidase.